Reading from the N-terminus, the 359-residue chain is Fructose-bisphosphate aldolase, cytoplasmic isozyme (359 aa).

2 residues coordinate substrate: Arg-52 and Lys-142. Glu-184 serves as the catalytic Proton acceptor. Catalysis depends on Lys-226, which acts as the Schiff-base intermediate with dihydroxyacetone-P.

This sequence belongs to the class I fructose-bisphosphate aldolase family.

It is found in the cytoplasm. It catalyses the reaction beta-D-fructose 1,6-bisphosphate = D-glyceraldehyde 3-phosphate + dihydroxyacetone phosphate. It functions in the pathway carbohydrate degradation; glycolysis; D-glyceraldehyde 3-phosphate and glycerone phosphate from D-glucose: step 4/4. This chain is Fructose-bisphosphate aldolase, cytoplasmic isozyme (ALDC), found in Cicer arietinum (Chickpea).